A 98-amino-acid polypeptide reads, in one-letter code: NADH-ubiquinone oxidoreductase chain 4L (98 aa).

Transmembrane regions (helical) follow at residues Pro-2–Phe-22, Ser-29–Leu-49, and Ile-61–Val-81.

The protein belongs to the complex I subunit 4L family. Core subunit of respiratory chain NADH dehydrogenase (Complex I) which is composed of 45 different subunits.

It localises to the mitochondrion inner membrane. It carries out the reaction a ubiquinone + NADH + 5 H(+)(in) = a ubiquinol + NAD(+) + 4 H(+)(out). Core subunit of the mitochondrial membrane respiratory chain NADH dehydrogenase (Complex I) which catalyzes electron transfer from NADH through the respiratory chain, using ubiquinone as an electron acceptor. Part of the enzyme membrane arm which is embedded in the lipid bilayer and involved in proton translocation. The polypeptide is NADH-ubiquinone oxidoreductase chain 4L (MT-ND4L) (Hapalemur aureus (Golden bamboo lemur)).